A 268-amino-acid polypeptide reads, in one-letter code: Microtubule-associated protein RP/EB family member 1 (268 aa).

Residue Ala2 is modified to N-acetylalanine. The Calponin-homology (CH) domain maps to 14–116 (NLSRHDMLAW…FVQWFKKFFD (103 aa)). Position 66 is an N6-crotonyllysine (Lys66). At Tyr124 the chain carries Phosphotyrosine. The interaction with MTUS2/TIP150 stretch occupies residues 124 to 268 (YDPVAARQGQ…GGPQEEQEEY (145 aa)). Positions 146-191 (LSKPKKPLGSGSAAPQRPIATQRTTAAPKAGPGMVRKNPGMGNGDD) are disordered. The residue at position 155 (Ser155) is a Phosphoserine. In terms of domain architecture, EB1 C-terminal spans 185-255 (GMGNGDDEAA…LYATDEGFVI (71 aa)). Positions 206-211 (TVEDLE) are interaction with APC. A DCTN1-binding region spans residues 208–268 (EDLEKERDFY…GGPQEEQEEY (61 aa)). Position 220 is an N6-acetyllysine (Lys220). The segment at 220 to 242 (KLRNIELICQENEGENDPVLQRI) is APC-binding. Positions 232–255 (EGENDPVLQRIVDILYATDEGFVI) are interaction with SKA1.

The protein belongs to the MAPRE family. Homodimer. Heterodimer with MAPRE3. Interacts with DCTN1, DCTN2, TERF1 and dynein intermediate chain. Interaction with DIAPH1 and DIAPH2. Interacts (via C-terminal residues 206-211) with APC (via C-terminal residues 2674-2845); the interaction inhibits association with and bundling of F-actin. Interacts with CLASP2, DST, KIF2C and STIM1; probably required for their targeting to the growing microtubule plus ends. Interacts with MTUS2; interaction is direct and probably targets MTUS2 to microtubules. Interacts (via C-terminus) with SKA1 (via SXIP motif); the interaction is direct and stabilizes the kinetochore-microtubule attachment of the SKA1 complex. Interacts with APC2. Interacts with CLASP1. Interacts with CDK5RAP2. According to another report, MAPRE1 does not interact with CDK5RAP2. Interacts with MACF1. Interacts with RABL2/RABL2A; binds preferentially to GTP-bound RABL2. Interacts with KCNAB2. Interacts (via C-terminus) with CLIP1. Interacts with SLAIN2 and SLAIN1. Interacts with KIF18B; this interaction is required for efficient accumulation of KIF18B at microtubule plus ends. Interacts with MISP. Interacts with KNSTRN. Interacts with NCKAP5L. Interacts with AKAP9. Interacts with PDE4DIP; this interaction, which is PDE4DIP isoform-specific, is required for its recruitment to the Golgi apparatus. Interacts with CAMSAP2. May form a pericentrosomal complex with AKAP9, CDK5RAP2 and PDE4DIP isoform 2/MMG8/SMYLE; within this complex, MAPRE1 binding to CDK5RAP2 may be mediated by PDE4DIP. Contrary to other mammalian species, does not interact with CDK5RAP2, possibly due to the lack of conservation of the MAPRE1-binding motif in rat CDK5RAP2. Interacts with AKNA. Interacts with GAS2L1, GAS2L2, and GAS2L3. Interacts with RARRES1 and AGBL2. In terms of processing, acetylation at Lys-220 by KAT2B/PCAF promotes dynamic kinetochore-microtubule interactions in early mitosis. Crotonylated by KAT5 during mitosis, promoting astral microtubule plasticity and dynamic connection between astral microtubules and the cortex during mitotic chromosome segregation, thereby ensuring accurate spindle positioning in mitosis. Decrotonylated by HDAC3.

The protein resides in the cytoplasm. It localises to the cytoskeleton. It is found in the microtubule organizing center. Its subcellular location is the centrosome. The protein localises to the golgi apparatus. The protein resides in the spindle. It localises to the spindle pole. Functionally, plus-end tracking protein (+TIP) that binds to the plus-end of microtubules and regulates the dynamics of the microtubule cytoskeleton. Recruits other +TIP proteins to microtubules by binding to a conserved Ser-X-Leu-Pro (SXLP) motif in their polypeptide chains. Promotes cytoplasmic microtubule nucleation and elongation. Involved in mitotic spindle positioning by stabilizing microtubules and promoting dynamic connection between astral microtubules and the cortex during mitotic chromosome segregation. Assists chromosome alignment in metaphase by recruiting the SKA complex to the spindle and stabilizing its interactions with microtubule bundles (K-fibers). Also acts as a regulator of minus-end microtubule organization: interacts with the complex formed by AKAP9 and PDE4DIP, leading to recruit CAMSAP2 to the Golgi apparatus, thereby tethering non-centrosomal minus-end microtubules to the Golgi, an important step for polarized cell movement. Promotes elongation of CAMSAP2-decorated microtubule stretches on the minus-end of microtubules. Acts as a regulator of autophagosome transport via interaction with CAMSAP2. Functions downstream of Rho GTPases and DIAPH1 in stable microtubule formation. May play a role in cell migration. In Rattus norvegicus (Rat), this protein is Microtubule-associated protein RP/EB family member 1 (Mapre1).